The primary structure comprises 318 residues: Deoxyhypusine hydroxylase (318 aa).

Fe cation is bound by residues His65, Glu66, His98, and Glu99. 4 HEAT-like PBS-type repeats span residues 96-122, 194-220, 225-251, and 258-284; these read VRHE…YYKE, YRYR…GFKD, FRHE…VLEN, and VRHE…FSKD. Residues His227, Glu228, His260, and Glu261 each contribute to the Fe cation site.

It belongs to the deoxyhypusine hydroxylase family. Fe(2+) is required as a cofactor.

It localises to the cytoplasm. Its subcellular location is the nucleus. It carries out the reaction [eIF5A protein]-deoxyhypusine + AH2 + O2 = [eIF5A protein]-hypusine + A + H2O. It participates in protein modification; eIF5A hypusination. Its function is as follows. Catalyzes the hydroxylation of the N(6)-(4-aminobutyl)-L-lysine intermediate to form hypusine, an essential post-translational modification only found in mature eIF-5A factor. This is Deoxyhypusine hydroxylase (lia1) from Schizosaccharomyces pombe (strain 972 / ATCC 24843) (Fission yeast).